A 458-amino-acid polypeptide reads, in one-letter code: Glutamyl-tRNA reductase (458 aa).

Substrate is bound by residues 49–52 (TCNR), Ser111, 116–118 (ETE), and Gln122. Residue Cys50 is the Nucleophile of the active site. NADP(+) is bound at residue 191-196 (GAGKMS). 2 stretches are compositionally biased toward basic and acidic residues: residues 426-440 (IPKDGEEHSSSKEVE) and 448-458 (ERGHHESDFHN). Residues 426–458 (IPKDGEEHSSSKEVESVTQSSTERGHHESDFHN) are disordered.

The protein belongs to the glutamyl-tRNA reductase family. In terms of assembly, homodimer.

It catalyses the reaction (S)-4-amino-5-oxopentanoate + tRNA(Glu) + NADP(+) = L-glutamyl-tRNA(Glu) + NADPH + H(+). The protein operates within porphyrin-containing compound metabolism; protoporphyrin-IX biosynthesis; 5-aminolevulinate from L-glutamyl-tRNA(Glu): step 1/2. Functionally, catalyzes the NADPH-dependent reduction of glutamyl-tRNA(Glu) to glutamate 1-semialdehyde (GSA). The polypeptide is Glutamyl-tRNA reductase (Natranaerobius thermophilus (strain ATCC BAA-1301 / DSM 18059 / JW/NM-WN-LF)).